Consider the following 195-residue polypeptide: Magnetosome membrane protein 22 (195 aa).

The segment covering 1 to 28 has biased composition (low complexity); the sequence is MAAQTAASEAPAPAAAPADSPTTAGPTP. The segment at 1–31 is disordered; that stretch reads MAAQTAASEAPAPAAAPADSPTTAGPTPDSV. The next 3 helical transmembrane spans lie at 45–65, 90–110, and 115–135; these read VLAA…AAVV, SVIA…AVAV, and LIPG…AGAT.

It is found in the magnetosome membrane. The protein is Magnetosome membrane protein 22 of Magnetospirillum gryphiswaldense (strain DSM 6361 / JCM 21280 / NBRC 15271 / MSR-1).